A 224-amino-acid chain; its full sequence is Synaptogyrin-2 (224 aa).

At Met-1 the chain carries N-acetylmethionine. A Phosphoserine modification is found at Ser-3. Residues 20-171 enclose the MARVEL domain; sequence FLTQPQVVAR…LASLAYQRYK (152 aa). The next 4 membrane-spanning stretches (helical) occupy residues 26 to 46, 73 to 93, 105 to 125, and 147 to 167; these read VVAR…IYGE, AIGV…AYFP, VIGD…GFCF, and AAIT…SLAY.

Belongs to the synaptogyrin family. (Microbial infection) Interacts with SFTS phlebovirus protein NSs; may be involved in virus replication. In terms of processing, may be tyrosine phosphorylated by Src. Ubiquitous; low expression in brain.

It is found in the cytoplasmic vesicle membrane. Its subcellular location is the cytoplasmic vesicle. It localises to the secretory vesicle. The protein resides in the synaptic vesicle membrane. The protein localises to the lipid droplet. May play a role in regulated exocytosis. In neuronal cells, modulates the localization of synaptophysin/SYP into synaptic-like microvesicles and may therefore play a role in the formation and/or the maturation of this vesicles. May also play a role in GLUT4 storage and transport to the plasma membrane. Its function is as follows. (Microbial infection) May play a role in the assembly of cytoplasmic inclusion bodies required for SFTS phlebovirus replication. This is Synaptogyrin-2 from Homo sapiens (Human).